The following is a 125-amino-acid chain: Fumarate reductase subunit D (125 aa).

Helical transmembrane passes span 30–50, 60–80, and 105–125; these read FAMITPVTVLVLGILVPMGVI, VVSFATSIIGALFIIATLALP, and IACYAIAGLISALAVVFIFML.

The protein belongs to the FrdD family. Part of an enzyme complex containing four subunits: a flavoprotein (FrdA), an iron-sulfur protein (FrdB), and two hydrophobic anchor proteins (FrdC and FrdD).

It is found in the cell inner membrane. Anchors the catalytic components of the fumarate reductase complex to the cell membrane, binds quinones. The protein is Fumarate reductase subunit D of Vibrio vulnificus (strain YJ016).